The sequence spans 556 residues: Beta-hexosaminidase subunit beta (556 aa).

A signal peptide spans 1-42 (MELCGLGLPRPPMLLALLLATLLAAMLALLTQVALVVQVAEA). Residues 43–121 (ARAPSVSAKP…HHEPAEFQAK (79 aa)) constitute a propeptide that is removed on maturation. N-linked (GlcNAc...) asparagine glycosylation is present at Asn-84. The cysteines at positions 91 and 137 are disulfide-linked. N-linked (GlcNAc...) asparagine glycans are attached at residues Asn-142, Asn-190, and Asn-327. Intrachain disulfides connect Cys-309–Cys-360 and Cys-534–Cys-551. Glu-355 (proton donor) is an active-site residue.

This sequence belongs to the glycosyl hydrolase 20 family. In terms of assembly, there are 3 forms of beta-hexosaminidase: hexosaminidase A is a heterodimer composed of one subunit alpha and one subunit beta (chain A and B); hexosaminidase B is a homodimer of two beta subunits (two chains A and B); hexosaminidase S is a homodimer of two alpha subunits. The composition of the dimer (isozyme A versus isozyme S) has a significant effect on the substrate specificity of the alpha subunit active site. Post-translationally, N-linked glycans at Asn-142 and Asn-190 consist of Man(3)-GlcNAc(2) and Man(5 to 7)-GlcNAc(2), respectively. The beta-A and beta-B chains are produced by proteolytic processing of the precursor beta chain.

Its subcellular location is the lysosome. The protein localises to the cytoplasmic vesicle. It is found in the secretory vesicle. It localises to the cortical granule. The enzyme catalyses Hydrolysis of terminal non-reducing N-acetyl-D-hexosamine residues in N-acetyl-beta-D-hexosaminides.. The catalysed reaction is N-acetyl-beta-D-galactosaminyl-(1-&gt;4)-beta-D-3-sulfogalactosyl-(1-&gt;4)-beta-D-glucosyl-(1&lt;-&gt;1')-ceramide + H2O = a beta-D-3-sulfogalactosyl-(1-&gt;4)-beta-D-glucosyl-(1&lt;-&gt;1')-ceramide + N-acetyl-beta-D-galactosamine. It carries out the reaction a ganglioside GM2 (d18:1(4E)) + H2O = a ganglioside GM3 (d18:1(4E)) + N-acetyl-beta-D-galactosamine. It catalyses the reaction a ganglioside GM2 + H2O = a ganglioside GM3 + N-acetyl-beta-D-galactosamine. The enzyme catalyses beta-D-GalNAc-(1-&gt;4)-alpha-L-IdoA-(1-&gt;3)-beta-D-GalNAc-4-sulfate-(1-&gt;4)-alpha-L-IdoA-(1-&gt;3)-D-GalNAc-4-sulfate + H2O = alpha-L-IdoA-(1-&gt;3)-beta-D-GalNAc-4-sulfate-(1-&gt;4)-alpha-L-IdoA-(1-&gt;3)-D-GalNAc-4-sulfate + N-acetyl-D-galactosamine. The catalysed reaction is N-acetyl-beta-D-6-sulfogalactosaminyl-(1-&gt;4)-alpha-L-iduronyl-(1-&gt;3)-N-acetyl-D-6-sulfogalactosamine + H2O = alpha-L-iduronyl-(1-&gt;3)-N-acetyl-D-6-sulfogalactosamine + N-acetyl-D-6-sulfogalactosamine. With respect to regulation, addition of GM2A stimulates the hydrolysis of sulfated glycosphingolipid SM2 and the ganglioside GM2. In terms of biological role, hydrolyzes the non-reducing end N-acetyl-D-hexosamine and/or sulfated N-acetyl-D-hexosamine of glycoconjugates, such as the oligosaccharide moieties from proteins and neutral glycolipids, or from certain mucopolysaccharides. The isozyme B does not hydrolyze each of these substrates, however hydrolyzes efficiently neutral oligosaccharide. Only the isozyme A is responsible for the degradation of GM2 gangliosides in the presence of GM2A. During fertilization is responsible, at least in part, for the zona block to polyspermy. Present in the cortical granules of non-activated oocytes, is exocytosed during the cortical reaction in response to oocyte activation and inactivates the sperm galactosyltransferase-binding site, accounting for the block in sperm binding to the zona pellucida. The chain is Beta-hexosaminidase subunit beta from Homo sapiens (Human).